A 374-amino-acid chain; its full sequence is Mitochondrial import inner membrane translocase subunit tim50 (374 aa).

The transit peptide at 1–48 directs the protein to the mitochondrion; that stretch reads MILNKVAKCYGKQIGFFGNKTTQFIKPNQTIFLIGGTKRLFTTQQQQS. Residues 42-97 form a disordered region; sequence TTQQQQSPKKEEPKSEQQKKVEDKTEEKEKEKDEEENENEKEKENEDGEGQKKKSK. Composition is skewed to basic and acidic residues over residues 49–72 and 81–93; these read PKKE…KEKE and EKEK…EGQK. Residues 103–125 traverse the membrane as a helical segment; that stretch reads IVTSVTSTFFAGVLVASTFGYLT. Residues 191 to 332 form the FCP1 homology domain; that stretch reads PGGKKYTLVI…IELLPVLESF (142 aa).

It belongs to the TIM50 family. As to quaternary structure, component of the mitochondrial import inner membrane translocase complex.

It localises to the mitochondrion inner membrane. In terms of biological role, component of the mitochondrial import inner membrane translocase that mediates the translocation of transit peptide-containing proteins across the mitochondrial inner membrane. This is Mitochondrial import inner membrane translocase subunit tim50 (timm50) from Dictyostelium discoideum (Social amoeba).